A 755-amino-acid chain; its full sequence is Catalase-peroxidase (755 aa).

The tryptophyl-tyrosyl-methioninium (Trp-Tyr) (with M-267) cross-link spans 93-241 (WHSAGTYRVF…LAAAHMGLIY (149 aa)). The Proton acceptor role is filled by His-94. A cross-link (tryptophyl-tyrosyl-methioninium (Tyr-Met) (with W-93)) is located at residues 241–267 (YVNPEGPDGNPDPVAAARDIRVTFGRM). Heme b is bound at residue His-282.

It belongs to the peroxidase family. Peroxidase/catalase subfamily. As to quaternary structure, homodimer or homotetramer. It depends on heme b as a cofactor. In terms of processing, formation of the three residue Trp-Tyr-Met cross-link is important for the catalase, but not the peroxidase activity of the enzyme.

It is found in the cytoplasm. The enzyme catalyses H2O2 + AH2 = A + 2 H2O. It catalyses the reaction 2 H2O2 = O2 + 2 H2O. Functionally, bifunctional enzyme with both catalase and broad-spectrum peroxidase activity. This is Catalase-peroxidase from Podospora anserina (strain S / ATCC MYA-4624 / DSM 980 / FGSC 10383) (Pleurage anserina).